We begin with the raw amino-acid sequence, 979 residues long: Oncostatin-M-specific receptor subunit beta (979 aa).

The N-terminal stretch at 1–27 is a signal peptide; the sequence is MALFAVFQTTFFLTLLSLRTYQSEVLA. Residues 28–740 are Extracellular-facing; it reads ERLPLTPVSL…VTTPDEHSSM (713 aa). Asn163 carries N-linked (GlcNAc...) asparagine glycosylation. Cys245 and Cys255 are joined by a disulfide. Residues Asn326 and Asn380 are each glycosylated (N-linked (GlcNAc...) asparagine). Fibronectin type-III domains are found at residues 335-428, 433-528, 529-623, and 625-736; these read NPFS…TLEA, APDV…DPEN, KEVE…SQEL, and PSDN…TPDE. The short motif at 415-419 is the WSXWS motif element; that stretch reads WSEWS. N-linked (GlcNAc...) asparagine glycosylation is found at Asn446 and Asn580. Residues 741–761 form a helical membrane-spanning segment; the sequence is LIHILLPMVFCVLLIMVMCYL. Residues 762–979 lie on the Cytoplasmic side of the membrane; the sequence is KSQWIKETCY…TLLDPGEHYC (218 aa). Residues 770-778 carry the Box 1 motif motif; sequence CYPDIPDPY. Phosphoserine occurs at positions 826 and 889.

Belongs to the type I cytokine receptor family. Type 2 subfamily. Heterodimer composed of OSMR and IL6ST (type II OSM receptor). Heterodimer with IL31RA to form the IL31 receptor. In terms of tissue distribution, expressed in keratinocytes (at protein level). Expressed at relatively high levels in all neural cells as well as fibroblast and epithelial cells.

The protein resides in the membrane. Functionally, associates with IL31RA to form the IL31 receptor. Binds IL31 to activate STAT3 and possibly STAT1 and STAT5. Capable of transducing OSM-specific signaling events. This chain is Oncostatin-M-specific receptor subunit beta (OSMR), found in Homo sapiens (Human).